The sequence spans 734 residues: Meiotic driver SPOK1 (734 aa).

Residues 4 to 41 adopt a coiled-coil conformation; that stretch reads KDRIAQLLRELEEAKARVEEAKAREAQERCEKERLQLE. Disordered regions lie at residues 180–222 and 414–499; these read ELTQ…ICSN and LSSA…MADP. Polar residues predominate over residues 416-429; that stretch reads SAPSSQNTDISEYT. Over residues 457-468 the composition is skewed to basic and acidic residues; sequence NEHDEHDEDHSE.

It localises to the cytoplasm. Its subcellular location is the nucleus. Promotes unequal transmission of alleles from the parental zygote to progeny spores by acting as poison/antidote system, leading to poisoning of progeny that do not inherit the allele. May possess DNA nuclease activity that leads to spore killing, and a kinase activity that confers resistance to the nuclease activity. Can suppress meiotic drive by the P.anserina SPOK2, SPOK3 and SPOK4 proteins. This is Meiotic driver SPOK1 from Podospora comata.